The sequence spans 512 residues: MFAKATRNFLKEVDAGGDLISVSHLNDSDKLQLLSLVTKKKRYWCWQRPKYQILSATLEDVLTEGHCLSPVVVESDFVKYESKCENHKSGAIGTVVGKVKLNVGGKGVVESHSSFGTLRKQEVDVQQLIQDAVKRTVNMDNLVLQQVLESRNEVLCVLTQKIMTTQKCVISEHVQSEETCGGMVGIQTKTIQVSATEDGTVTTDTNVVLEIPAATTIAYGIMELFVKQDGQFEFCLLQGKHGGFEHERKLDSVYLDPLAYREFAFLDMLDGGQGISSQDGPLRVVKQATLHLERSFHPFAVLPAQQQRALFCVLQKILFDEELLRALEQVCDDVAGGLWSSQAVLAMEELTDSQQQDLTAFLQLVGYRIQGEHPGPQDEVSNQKLFATAYFLVSALAEMPDNATVFLGTCCKLHVISSLCCLLHALSDDSVCDFHNPTLAPLRDTERFGIVQRLFASADIALERMQFSAKATILKDSCIFPLILHITLSGLSTLSKEHEEELCQSGHATGQD.

The segment at 1 to 56 (MFAKATRNFLKEVDAGGDLISVSHLNDSDKLQLLSLVTKKKRYWCWQRPKYQILSA) is membrane targeting domain. Residue Cys45 is modified to S-(2-succinyl)cysteine. A Glycyl lysine isopeptide (Lys-Gly) (interchain with G-Cter in ubiquitin) cross-link involves residue Lys120. S-(2-succinyl)cysteine is present on residues Cys156, Cys168, and Cys180. Lys189 is covalently cross-linked (Glycyl lysine isopeptide (Lys-Gly) (interchain with G-Cter in ubiquitin)). Residues Cys235, Cys411, and Cys420 each carry the S-(2-succinyl)cysteine modification.

Belongs to the gasdermin family. In terms of assembly, homooligomer; homooligomeric ring-shaped pore complex containing 27-28 subunits when inserted in the membrane. Post-translationally, cleavage at Asp-270 by CASP3 (mature and uncleaved precursor forms) or granzyme B (GZMB) relieves autoinhibition and is sufficient to initiate pyroptosis. In terms of processing, succination by the Krebs cycle intermediate fumarate, which leads to S-(2-succinyl)cysteine residues, inhibits processing by caspases, and ability to initiate pyroptosis. Succination modification is catalyzed by a non-enzymatic reaction caused by an accumulation of fumarate. Ubiquitinated on Lys-120 and Lys-189 via 'Lys-48'-linked polyubiquitin chains, leading to proteasomal degradation. Deubiquitinated by USP48, leading to increased stability. Post-translationally, palmitoylated. As to expression, expressed in spleen, kidney, large and small intestine, testicle, stomach and by CD4(+)CD(8+) T cells in thymus. Expressed by macrophages.

Its subcellular location is the cell membrane. It localises to the cytoplasm. The protein resides in the cytosol. With respect to regulation, the full-length protein before cleavage is inactive: intramolecular interactions between N- and C-terminal domains mediate autoinhibition in the absence of activation signal. The intrinsic pyroptosis-inducing activity is carried by the released N-terminal moiety (Gasdermin-E, N-terminal) following cleavage by CASP3 or granzyme B (GZMB). Activated by NLRP1 in the absence of GSDMD expression: NLRP1 cleaves and activates CASP8, promoting downstream activation of CASP3 and subsequent activation of GSDME. Functionally, precursor of a pore-forming protein that converts non-inflammatory apoptosis to pyroptosis. This form constitutes the precursor of the pore-forming protein: upon cleavage, the released N-terminal moiety (Gasdermin-E, N-terminal) binds to membranes and forms pores, triggering pyroptosis. Its function is as follows. Pore-forming protein produced by cleavage by CASP3 or granzyme B (GZMB), which converts non-inflammatory apoptosis to pyroptosis or promotes granzyme-mediated pyroptosis, respectively. After cleavage, moves to the plasma membrane, homooligomerizes within the membrane and forms pores of 10-15 nanometers (nm) of inner diameter, allowing the release of mature interleukins (IL1B and IL16) and triggering pyroptosis. Binds to inner leaflet lipids, bisphosphorylated phosphatidylinositols, such as phosphatidylinositol (4,5)-bisphosphate. Cleavage by CASP3 switches CASP3-mediated apoptosis induced by TNF or danger signals, such as chemotherapy drugs, to pyroptosis. Mediates secondary necrosis downstream of the mitochondrial apoptotic pathway and CASP3 activation as well as in response to viral agents. Exhibits bactericidal activity. Cleavage by GZMB promotes tumor suppressor activity by triggering robust anti-tumor immunity. Suppresses tumors by mediating granzyme-mediated pyroptosis in target cells of natural killer (NK) cells: cleavage by granzyme B (GZMB), delivered to target cells from NK-cells, triggers pyroptosis of tumor cells and tumor suppression. May play a role in the p53/TP53-regulated cellular response to DNA damage. This is Gasdermin-E from Mus musculus (Mouse).